A 39-amino-acid polypeptide reads, in one-letter code: Cytochrome b6-f complex subunit 5 (39 aa).

Residues 5–25 (LLCGIVLGLVPITLLGLFVAA) traverse the membrane as a helical segment.

The protein belongs to the PetG family. As to quaternary structure, the 4 large subunits of the cytochrome b6-f complex are cytochrome b6, subunit IV (17 kDa polypeptide, PetD), cytochrome f and the Rieske protein, while the 4 small subunits are PetG, PetL, PetM and PetN. The complex functions as a dimer.

It is found in the cellular thylakoid membrane. In terms of biological role, component of the cytochrome b6-f complex, which mediates electron transfer between photosystem II (PSII) and photosystem I (PSI), cyclic electron flow around PSI, and state transitions. PetG is required for either the stability or assembly of the cytochrome b6-f complex. The sequence is that of Cytochrome b6-f complex subunit 5 from Prochlorococcus marinus (strain SARG / CCMP1375 / SS120).